A 915-amino-acid polypeptide reads, in one-letter code: Protein O-mannosyl-transferase TMTC3 (915 aa).

Topologically, residues 1–8 (MANINLKE) are cytoplasmic. Residues 9 to 29 (ITLIVGVVTACYWNSLFCGFV) traverse the membrane as a helical segment. The Extracellular portion of the chain corresponds to 30–93 (FDDVSAILDN…LSELKPMSYH (64 aa)). Residues 94–114 (LLNMIFHAVVSVIFLKVCKLF) traverse the membrane as a helical segment. The Cytoplasmic portion of the chain corresponds to 115–120 (LDNKSS). The next 2 helical transmembrane spans lie at 121–139 (VIASLLFAVHPIHTEAVTG) and 140–158 (VVGRAELLSSIFFLAAFLS). At 159-166 (YTRSKGPD) the chain is on the cytoplasmic side. Residues 167 to 187 (NSIIWTPIALTVFLVAVATLC) traverse the membrane as a helical segment. Topologically, residues 188-193 (KEQGIT) are extracellular. The helical transmembrane segment at 194 to 214 (VVGICCVYEVFIAQGYTLPLL) threads the bilayer. The Cytoplasmic segment spans residues 215–231 (CTTAGQFLRGKGSIPFS). A helical transmembrane segment spans residues 232-252 (MLQTLVKLIVLMFSTLLLVVI). Residues 253–317 (RVQVIQSQLP…TIPLIESLLD (65 aa)) are Extracellular-facing. Residues 318 to 338 (IRNLATFTFFCFLGMLGVFSI) traverse the membrane as a helical segment. The Cytoplasmic portion of the chain corresponds to 339 to 353 (RYSGDSSKTVLMALC). The chain crosses the membrane as a helical span at residues 354–374 (LMALPFIPASNLFFPVGFVVA). Topologically, residues 375–376 (ER) are extracellular. A helical transmembrane segment spans residues 377–397 (VLYVPSMGFCILVAHGWQKIS). Over 398–404 (TKSVFKK) the chain is Cytoplasmic. The helical transmembrane segment at 405–423 (LSWICLSMVILTHSLKTFH) threads the bilayer. The Extracellular portion of the chain corresponds to 424–915 (RNWDWESEYT…EEIERILNGE (492 aa)). 9 TPR repeats span residues 446–479 (AKLWNNVGHALENEKNFERALKYFLQATHVQPDD), 480–513 (IGAHMNVGRTYKNLNRTKEAEESYMMAKSLMPQI), 529–562 (NVYINLANLIRANESRLEEADQLYRQAISMRPDF), 563–596 (KQAYISRGELLLKMNKPLKAKEAYLKALELDRNN), 597–631 (ADLWYNLAIVHIELKEPNEALKKNFNRALELNPKH), 669–702 (ANGYFNLGMLAMDDKKDNEAEIWMKKAIKLQADF), 703–736 (RSALFNLALLYSQTAKELKALPILEELLRYYPDH), 738–771 (KGLILKGDILMNQKKDILGAKKCFERILEMDPSN), and 772–805 (VQGKHNLCVVYFEEKDLLKAERCLLETLALAPHE). An N-linked (GlcNAc...) asparagine glycan is attached at Asn494. Phosphotyrosine is present on Tyr503. An N-linked (GlcNAc...) asparagine glycan is attached at Asn541. The interval 848-892 (KEIRGESRQTQIVKTSDNKSQSKSNKQLGKNGDEETPHKTTKDIK) is disordered. N-linked (GlcNAc...) asparagine glycosylation occurs at Asn865. The span at 865–874 (NKSQSKSNKQ) shows a compositional bias: low complexity. Basic and acidic residues predominate over residues 878–892 (NGDEETPHKTTKDIK).

It belongs to the TMTC family.

Its subcellular location is the membrane. It is found in the endoplasmic reticulum. The enzyme catalyses a di-trans,poly-cis-dolichyl beta-D-mannosyl phosphate + L-seryl-[protein] = 3-O-(alpha-D-mannosyl)-L-seryl-[protein] + a di-trans,poly-cis-dolichyl phosphate + H(+). It catalyses the reaction a di-trans,poly-cis-dolichyl beta-D-mannosyl phosphate + L-threonyl-[protein] = 3-O-(alpha-D-mannosyl)-L-threonyl-[protein] + a di-trans,poly-cis-dolichyl phosphate + H(+). Its pathway is protein modification; protein glycosylation. In terms of biological role, transfers mannosyl residues to the hydroxyl group of serine or threonine residues. The 4 members of the TMTC family are O-mannosyl-transferases dedicated primarily to the cadherin superfamily, each member seems to have a distinct role in decorating the cadherin domains with O-linked mannose glycans at specific regions. Also acts as O-mannosyl-transferase on other proteins such as PDIA3. Involved in the positive regulation of proteasomal protein degradation in the endoplasmic reticulum (ER), and the control of ER stress response. In Homo sapiens (Human), this protein is Protein O-mannosyl-transferase TMTC3.